The primary structure comprises 212 residues: Large ribosomal subunit protein uL3 (212 aa).

At Gln-153 the chain carries N5-methylglutamine.

This sequence belongs to the universal ribosomal protein uL3 family. In terms of assembly, part of the 50S ribosomal subunit. Forms a cluster with proteins L14 and L19. In terms of processing, methylated by PrmB.

Its function is as follows. One of the primary rRNA binding proteins, it binds directly near the 3'-end of the 23S rRNA, where it nucleates assembly of the 50S subunit. The chain is Large ribosomal subunit protein uL3 from Shewanella pealeana (strain ATCC 700345 / ANG-SQ1).